A 535-amino-acid chain; its full sequence is NAD(P)H-quinone oxidoreductase chain 4 2 (535 aa).

A run of 14 helical transmembrane segments spans residues Phe9–Ile29, Trp51–Gly71, Leu106–Leu126, Leu130–Asp150, Leu152–Trp172, Phe184–Phe204, Leu227–His247, Thr258–Met278, Leu290–Thr310, Ile326–Gly346, Ala347–Ala367, Leu399–Gly419, Leu432–Met452, and Val479–Val499.

Belongs to the complex I subunit 4 family.

The protein resides in the cellular thylakoid membrane. The enzyme catalyses a plastoquinone + NADH + (n+1) H(+)(in) = a plastoquinol + NAD(+) + n H(+)(out). It carries out the reaction a plastoquinone + NADPH + (n+1) H(+)(in) = a plastoquinol + NADP(+) + n H(+)(out). In terms of biological role, NDH-1 shuttles electrons from NAD(P)H, via FMN and iron-sulfur (Fe-S) centers, to quinones in the respiratory chain. The immediate electron acceptor for the enzyme in this species is believed to be plastoquinone. Couples the redox reaction to proton translocation (for every two electrons transferred, four hydrogen ions are translocated across the cytoplasmic membrane), and thus conserves the redox energy in a proton gradient. The sequence is that of NAD(P)H-quinone oxidoreductase chain 4 2 from Synechococcus sp. (strain JA-3-3Ab) (Cyanobacteria bacterium Yellowstone A-Prime).